A 210-amino-acid polypeptide reads, in one-letter code: Fibrillarin-like rRNA/tRNA 2'-O-methyltransferase (210 aa).

The interval 1-34 (MTLPSGVERHDFGGETSLATQGQPVYGERTDGDW) is disordered. Residues 71 to 72 (TT), 87 to 88 (EF), 112 to 113 (DA), and 132 to 135 (DVAT) contribute to the S-adenosyl-L-methionine site.

This sequence belongs to the methyltransferase superfamily. Fibrillarin family. As to quaternary structure, interacts with nop5. Component of box C/D small ribonucleoprotein (sRNP) particles that contain rpl7ae, FlpA and nop5, plus a guide RNA.

In terms of biological role, involved in pre-rRNA and tRNA processing. Utilizes the methyl donor S-adenosyl-L-methionine to catalyze the site-specific 2'-hydroxyl methylation of ribose moieties in rRNA and tRNA. Site specificity is provided by a guide RNA that base pairs with the substrate. Methylation occurs at a characteristic distance from the sequence involved in base pairing with the guide RNA. In Haloarcula marismortui (strain ATCC 43049 / DSM 3752 / JCM 8966 / VKM B-1809) (Halobacterium marismortui), this protein is Fibrillarin-like rRNA/tRNA 2'-O-methyltransferase.